We begin with the raw amino-acid sequence, 273 residues long: Eukaryotic translation initiation factor 3 subunit G-2 (273 aa).

Residues 193–271 enclose the RRM domain; it reads SAVRISNLSE…LILCVEWSKP (79 aa).

This sequence belongs to the eIF-3 subunit G family. In terms of assembly, component of the eukaryotic translation initiation factor 3 (eIF-3) complex. The eIF-3 complex interacts with pix.

The protein resides in the cytoplasm. RNA-binding component of the eukaryotic translation initiation factor 3 (eIF-3) complex, which is involved in protein synthesis of a specialized repertoire of mRNAs and, together with other initiation factors, stimulates binding of mRNA and methionyl-tRNAi to the 40S ribosome. The eIF-3 complex specifically targets and initiates translation of a subset of mRNAs involved in cell proliferation. This subunit can bind 18S rRNA. This is Eukaryotic translation initiation factor 3 subunit G-2 from Drosophila melanogaster (Fruit fly).